The chain runs to 128 residues: Holo-[acyl-carrier-protein] synthase (128 aa).

2 residues coordinate Mg(2+): aspartate 9 and glutamate 56.

The protein belongs to the P-Pant transferase superfamily. AcpS family. The cofactor is Mg(2+).

The protein localises to the cytoplasm. The enzyme catalyses apo-[ACP] + CoA = holo-[ACP] + adenosine 3',5'-bisphosphate + H(+). Its function is as follows. Transfers the 4'-phosphopantetheine moiety from coenzyme A to a Ser of acyl-carrier-protein. This chain is Holo-[acyl-carrier-protein] synthase, found in Pelagibacter ubique (strain HTCC1062).